We begin with the raw amino-acid sequence, 79 residues long: ATP synthase subunit c (79 aa).

2 helical membrane passes run 11-31 and 53-73; these read MAAA…IGIL and FFIV…LGLY.

The protein belongs to the ATPase C chain family. As to quaternary structure, F-type ATPases have 2 components, F(1) - the catalytic core - and F(0) - the membrane proton channel. F(1) has five subunits: alpha(3), beta(3), gamma(1), delta(1), epsilon(1). F(0) has three main subunits: a(1), b(2) and c(10-14). The alpha and beta chains form an alternating ring which encloses part of the gamma chain. F(1) is attached to F(0) by a central stalk formed by the gamma and epsilon chains, while a peripheral stalk is formed by the delta and b chains.

It is found in the cell inner membrane. Its function is as follows. F(1)F(0) ATP synthase produces ATP from ADP in the presence of a proton or sodium gradient. F-type ATPases consist of two structural domains, F(1) containing the extramembraneous catalytic core and F(0) containing the membrane proton channel, linked together by a central stalk and a peripheral stalk. During catalysis, ATP synthesis in the catalytic domain of F(1) is coupled via a rotary mechanism of the central stalk subunits to proton translocation. In terms of biological role, key component of the F(0) channel; it plays a direct role in translocation across the membrane. A homomeric c-ring of between 10-14 subunits forms the central stalk rotor element with the F(1) delta and epsilon subunits. In Proteus mirabilis (strain HI4320), this protein is ATP synthase subunit c.